The chain runs to 240 residues: Ribonuclease 3 (240 aa).

The RNase III domain occupies Val10–Gly136. Position 49 (Glu49) interacts with Mg(2+). Asp53 is an active-site residue. 2 residues coordinate Mg(2+): Asp122 and Glu125. Glu125 is an active-site residue. Residues Asp163–Ala231 enclose the DRBM domain. The disordered stretch occupies residues Thr205–Ser240. The segment covering Gln219 to Ala228 has biased composition (low complexity).

The protein belongs to the ribonuclease III family. Homodimer. Requires Mg(2+) as cofactor.

Its subcellular location is the cytoplasm. It carries out the reaction Endonucleolytic cleavage to 5'-phosphomonoester.. Functionally, digests double-stranded RNA. Involved in the processing of primary rRNA transcript to yield the immediate precursors to the large and small rRNAs (23S and 16S). Processes some mRNAs, and tRNAs when they are encoded in the rRNA operon. Processes pre-crRNA and tracrRNA of type II CRISPR loci if present in the organism. The protein is Ribonuclease 3 of Thermobifida fusca (strain YX).